The sequence spans 1293 residues: Late blight resistance protein R1-A (1293 aa).

Coiled coils occupy residues 423-446 (RYSD…ESLQ) and 538-560 (PRMN…KLLN). The region spanning 539–826 (RMNEEIVGFE…SEAFIKSSEG (288 aa)) is the NB-ARC domain. 572–579 (GMPGLGKT) serves as a coordination point for ATP. LRR repeat units lie at residues 876-899 (AEEN…VYSH), 956-981 (FKFL…VYLK), 1027-1049 (MVKL…LLEN), 1056-1079 (LETL…KTPN), 1102-1125 (PIRL…ISAP), 1149-1172 (LKHL…KVSN), 1175-1197 (FPQL…ADDA), 1198-1222 (FPNL…FMDI), and 1235-1259 (ESVV…NFKL).

This sequence belongs to the disease resistance NB-LRR family.

The protein localises to the cytoplasm. It is found in the membrane. Confers resistance to late blight (Phytophthora infestans) races carrying the avirulence gene Avr1. Resistance proteins guard the plant against pathogens that contain an appropriate avirulence protein via an indirect interaction with this avirulence protein. That triggers a defense system including the hypersensitive response, which restricts the pathogen growth. The protein is Late blight resistance protein R1-A (R1A) of Solanum demissum (Wild potato).